A 459-amino-acid polypeptide reads, in one-letter code: Transcription factor AP-2-beta (459 aa).

K21 participates in a covalent cross-link: Glycyl lysine isopeptide (Lys-Gly) (interchain with G-Cter in SUMO). A disordered region spans residues 30–139 (HDGVPSHSSR…PQLSGLDPRR (110 aa)). Polar residues predominate over residues 35 to 51 (SHSSRLSQLGSVSQGPY). Over residues 121–132 (LLPQPRAALPQL) the composition is skewed to low complexity. At S258 the chain carries Phosphoserine; by PKA. The tract at residues 299–429 (RRKAANVTLL…YLTEALKGMD (131 aa)) is H-S-H (helix-span-helix), dimerization. Residues 435 to 459 (NTTNRHTSGEGPGSKTGDKEEKHRK) are disordered. The span at 450–459 (TGDKEEKHRK) shows a compositional bias: basic and acidic residues.

It belongs to the AP-2 family. In terms of assembly, binds DNA as a dimer. Can form homodimers or heterodimers with other AP-2 family members. Interacts with CITED4. Interacts with UBE2I. Interacts with KCTD1; this interaction represses transcription activation. Interacts with CITED2 (via C-terminus); the interaction stimulates TFAP2B-transcriptional activity. In terms of processing, sumoylated. Sumoylated on Lys-21; which inhibits transcriptional activity. In terms of tissue distribution, localizes to neurons in areas of the cerebral cortex, cerebellum and hypothalamus (at protein level).

The protein resides in the nucleus. Functionally, sequence-specific DNA-binding protein that interacts with inducible viral and cellular enhancer elements to regulate transcription of selected genes. AP-2 factors bind to the consensus sequence 5'-GCCNNNGGC-3' and activate genes involved in a large spectrum of important biological functions including proper eye, face, body wall, limb and neural tube development. They also suppress a number of genes including MCAM/MUC18, C/EBP alpha and MYC. AP-2-beta appears to be required for normal face and limb development and for proper terminal differentiation and function of renal tubular epithelia. The sequence is that of Transcription factor AP-2-beta (Tfap2b) from Mus musculus (Mouse).